The following is a 294-amino-acid chain: Syntaxin-19 (294 aa).

Residues 209 to 271 (LSEIEQRHKE…NNTKEKFGLA (63 aa)) enclose the t-SNARE coiled-coil homology domain.

It belongs to the syntaxin family. In terms of assembly, interacts with EGFR.

It localises to the cell membrane. The protein localises to the cytoplasm. Its function is as follows. Plays a role in endosomal trafficking of the epidermal growth factor receptor (EGFR). In Pongo abelii (Sumatran orangutan), this protein is Syntaxin-19 (STX19).